The following is a 445-amino-acid chain: Inward rectifier potassium channel 4 (445 aa).

Over 1–55 (MHGHNRNGQAHVPRRKRRNRFVKKNGQCNVYFANLSNKSQRYMADIFTTCVDTRW) the chain is Cytoplasmic. A helical membrane pass occupies residues 56 to 80 (RYMLMIFSAAFLVSWLFFGLLFWWI). The Extracellular portion of the chain corresponds to 81 to 119 (AFFHGDLEASPSVPAVGGPGGNGGESPNAPKPCIMHVNG). An intramembrane region (helical; Pore-forming) is located at residues 120 to 131 (FLGAFLFSVETQ). The pore-forming intramembrane region spans 132–138 (TTIGYGF). The short motif at 133–138 (TIGYGF) is the Selectivity filter element. Topologically, residues 139–147 (RCVTEECPL) are extracellular. A helical membrane pass occupies residues 148–169 (AVIAVVVQSIVGCVIDSFMIGT). Topologically, residues 170–445 (IMAKMARPKK…NISYRRESRI (276 aa)) are cytoplasmic. The short motif at 443–445 (SRI) is the PDZ-binding element.

Belongs to the inward rectifier-type potassium channel (TC 1.A.2.1) family. KCNJ4 subfamily. As to quaternary structure, homomultimeric and heteromultimeric association with KCNJ2 and KCNJ12. Interacts with DLG2 and DLG4. Associates, via its PDZ-recognition domain, with a complex containing LIN7A, LIN7B, LIN7C, DLG1, CASK and APBA1. Interacts with TAX1BP3. TAX1BP3 competes with LIN7 family members for KCNJ4 binding. Highly expressed in the forebrain, moderately in skeletal muscle. Im olfactory bulb, specifically expressed at the postsynaptic membrane of dendritic spines of granule cells.

It is found in the cell membrane. Its subcellular location is the postsynaptic cell membrane. It localises to the cytoplasmic vesicle membrane. The catalysed reaction is K(+)(in) = K(+)(out). Functionally, inward rectifier potassium channels are characterized by a greater tendency to allow potassium to flow into the cell rather than out of it. Their voltage dependence is regulated by the concentration of extracellular potassium; as external potassium is raised, the voltage range of the channel opening shifts to more positive voltages. The inward rectification is mainly due to the blockage of outward current by internal magnesium. Can be blocked by extracellular barium and cesium. The polypeptide is Inward rectifier potassium channel 4 (Kcnj4) (Mus musculus (Mouse)).